We begin with the raw amino-acid sequence, 326 residues long: F-box/LRR-repeat protein 12 (326 aa).

Residues 1-47 (MATFADLPDSVLLEIFSYLPVRDRIRISRVCHHWKKLVDDRWLWRHV) enclose the F-box domain. LRR repeat units follow at residues 51–78 (LYTM…RMGG), 86–111 (APQL…CLHV), 161–185 (VPAF…VLGG), 186–211 (TYRV…EVLG), 212–236 (CTLS…IRLT), 237–261 (VRGL…CLLG), and 266–291 (PEMP…ELQG).

As to quaternary structure, interacts with SKP1 and CUL1.

The protein operates within protein modification; protein ubiquitination. In terms of biological role, substrate-recognition component of the SCF (SKP1-CUL1-F-box protein)-type E3 ubiquitin ligase complex. Mediates the polyubiquitination and proteasomal degradation of CAMK1 leading to disruption of cyclin D1/CDK4 complex assembly which results in G1 cell cycle arrest in lung epithelia. The sequence is that of F-box/LRR-repeat protein 12 (FBXL12) from Bos taurus (Bovine).